Here is a 161-residue protein sequence, read N- to C-terminus: Allophycocyanin beta chain (161 aa).

N71 carries the N4-methylasparagine modification. C81 provides a ligand contact to (2R,3E)-phycocyanobilin.

Belongs to the phycobiliprotein family. Heterodimer of an alpha and a beta chain. Contains one covalently linked phycocyanobilin chromophore.

It localises to the plastid. The protein resides in the chloroplast thylakoid membrane. In terms of biological role, light-harvesting photosynthetic bile pigment-protein from the phycobiliprotein complex. Allophycocyanin has a maximum absorption at approximately 650 nanometers. The sequence is that of Allophycocyanin beta chain (apcB) from Pyropia haitanensis (Red seaweed).